A 285-amino-acid polypeptide reads, in one-letter code: Probable endonuclease 4 (285 aa).

Zn(2+) is bound by residues histidine 69, histidine 109, glutamate 145, aspartate 179, histidine 182, histidine 216, aspartate 229, histidine 231, and glutamate 261.

It belongs to the AP endonuclease 2 family. It depends on Zn(2+) as a cofactor.

The catalysed reaction is Endonucleolytic cleavage to 5'-phosphooligonucleotide end-products.. Its function is as follows. Endonuclease IV plays a role in DNA repair. It cleaves phosphodiester bonds at apurinic or apyrimidinic (AP) sites, generating a 3'-hydroxyl group and a 5'-terminal sugar phosphate. This chain is Probable endonuclease 4, found in Escherichia coli O1:K1 / APEC.